Reading from the N-terminus, the 264-residue chain is Indole-3-glycerol phosphate synthase (264 aa).

It belongs to the TrpC family.

It carries out the reaction 1-(2-carboxyphenylamino)-1-deoxy-D-ribulose 5-phosphate + H(+) = (1S,2R)-1-C-(indol-3-yl)glycerol 3-phosphate + CO2 + H2O. It functions in the pathway amino-acid biosynthesis; L-tryptophan biosynthesis; L-tryptophan from chorismate: step 4/5. This is Indole-3-glycerol phosphate synthase from Azoarcus sp. (strain BH72).